Reading from the N-terminus, the 185-residue chain is Ribosome-recycling factor (185 aa).

Belongs to the RRF family.

The protein resides in the cytoplasm. Functionally, responsible for the release of ribosomes from messenger RNA at the termination of protein biosynthesis. May increase the efficiency of translation by recycling ribosomes from one round of translation to another. This Streptococcus uberis (strain ATCC BAA-854 / 0140J) protein is Ribosome-recycling factor.